A 365-amino-acid polypeptide reads, in one-letter code: Holliday junction branch migration complex subunit RuvB (365 aa).

Residues 1–191 (MNFDPIDDFD…FGFTAHMDFY (191 aa)) are large ATPase domain (RuvB-L). Residues Leu-30, Arg-31, Gly-72, Lys-75, Thr-76, Ser-77, 138–140 (EDF), Arg-181, Tyr-191, and Arg-228 each bind ATP. Thr-76 contributes to the Mg(2+) binding site. The segment at 192–262 (EPEELQQILM…VAQAALAVYD (71 aa)) is small ATPAse domain (RuvB-S). A head domain (RuvB-H) region spans residues 265–365 (QLGLDRLDRS…QATLFDPNGE (101 aa)). Residues Arg-320 and Arg-325 each coordinate DNA.

This sequence belongs to the RuvB family. Homohexamer. Forms an RuvA(8)-RuvB(12)-Holliday junction (HJ) complex. HJ DNA is sandwiched between 2 RuvA tetramers; dsDNA enters through RuvA and exits via RuvB. An RuvB hexamer assembles on each DNA strand where it exits the tetramer. Each RuvB hexamer is contacted by two RuvA subunits (via domain III) on 2 adjacent RuvB subunits; this complex drives branch migration. In the full resolvosome a probable DNA-RuvA(4)-RuvB(12)-RuvC(2) complex forms which resolves the HJ.

It is found in the cytoplasm. It catalyses the reaction ATP + H2O = ADP + phosphate + H(+). Functionally, the RuvA-RuvB-RuvC complex processes Holliday junction (HJ) DNA during genetic recombination and DNA repair, while the RuvA-RuvB complex plays an important role in the rescue of blocked DNA replication forks via replication fork reversal (RFR). RuvA specifically binds to HJ cruciform DNA, conferring on it an open structure. The RuvB hexamer acts as an ATP-dependent pump, pulling dsDNA into and through the RuvAB complex. RuvB forms 2 homohexamers on either side of HJ DNA bound by 1 or 2 RuvA tetramers; 4 subunits per hexamer contact DNA at a time. Coordinated motions by a converter formed by DNA-disengaged RuvB subunits stimulates ATP hydrolysis and nucleotide exchange. Immobilization of the converter enables RuvB to convert the ATP-contained energy into a lever motion, pulling 2 nucleotides of DNA out of the RuvA tetramer per ATP hydrolyzed, thus driving DNA branch migration. The RuvB motors rotate together with the DNA substrate, which together with the progressing nucleotide cycle form the mechanistic basis for DNA recombination by continuous HJ branch migration. Branch migration allows RuvC to scan DNA until it finds its consensus sequence, where it cleaves and resolves cruciform DNA. The chain is Holliday junction branch migration complex subunit RuvB from Rhodococcus erythropolis (strain PR4 / NBRC 100887).